A 210-amino-acid chain; its full sequence is Ion-translocating oxidoreductase complex subunit G (210 aa).

A helical membrane pass occupies residues 9 to 29 (SLVLALFAIAATALVTITYAL). The residue at position 176 (Thr-176) is an FMN phosphoryl threonine.

The protein belongs to the RnfG family. In terms of assembly, the complex is composed of six subunits: RnfA, RnfB, RnfC, RnfD, RnfE and RnfG. FMN serves as cofactor.

The protein localises to the cell inner membrane. In terms of biological role, part of a membrane-bound complex that couples electron transfer with translocation of ions across the membrane. This Aliivibrio fischeri (strain MJ11) (Vibrio fischeri) protein is Ion-translocating oxidoreductase complex subunit G.